Reading from the N-terminus, the 281-residue chain is Pantothenate synthetase (281 aa).

30–37 is an ATP binding site; it reads MGNLHQGH. Residue His37 is the Proton donor of the active site. Gln61 provides a ligand contact to (R)-pantoate. A beta-alanine-binding site is contributed by Gln61. 149–152 is a binding site for ATP; sequence GNKD. A (R)-pantoate-binding site is contributed by Gln155. Residues Ile178 and 186 to 189 contribute to the ATP site; that span reads MSSR.

This sequence belongs to the pantothenate synthetase family. As to quaternary structure, homodimer.

Its subcellular location is the cytoplasm. It catalyses the reaction (R)-pantoate + beta-alanine + ATP = (R)-pantothenate + AMP + diphosphate + H(+). It participates in cofactor biosynthesis; (R)-pantothenate biosynthesis; (R)-pantothenate from (R)-pantoate and beta-alanine: step 1/1. In terms of biological role, catalyzes the condensation of pantoate with beta-alanine in an ATP-dependent reaction via a pantoyl-adenylate intermediate. This chain is Pantothenate synthetase, found in Shewanella baltica (strain OS155 / ATCC BAA-1091).